The chain runs to 399 residues: Carbamoyl phosphate synthase arginine-specific small chain (399 aa).

In terms of domain architecture, Glutamine amidotransferase type-1 spans 187–379 (DVALVDCGVK…VERMRCYRKL (193 aa)). C267 functions as the Nucleophile in the catalytic mechanism. Active-site residues include H352 and E354.

This sequence belongs to the CarA family. In terms of assembly, heterodimer composed of 2 chains; the small (or glutamine) chain promotes the hydrolysis of glutamine to ammonia, which is used by the large (or ammonia) chain to synthesize carbamoyl phosphate.

It localises to the cytoplasm. It carries out the reaction hydrogencarbonate + L-glutamine + 2 ATP + H2O = carbamoyl phosphate + L-glutamate + 2 ADP + phosphate + 2 H(+). It catalyses the reaction L-glutamine + H2O = L-glutamate + NH4(+). Its pathway is amino-acid biosynthesis; L-arginine biosynthesis; carbamoyl phosphate from bicarbonate: step 1/1. Small subunit of the arginine-specific carbamoyl phosphate synthase (CPSase). CPSase catalyzes the formation of carbamoyl phosphate from the ammonia moiety of glutamine, carbonate, and phosphate donated by ATP, constituting the first step of 2 biosynthetic pathways, one leading to arginine and/or urea and the other to pyrimidine nucleotides. The small subunit (glutamine amidotransferase) binds and cleaves glutamine to supply the large subunit with the substrate ammonia. This chain is Carbamoyl phosphate synthase arginine-specific small chain (CPA1), found in Eremothecium gossypii (strain ATCC 10895 / CBS 109.51 / FGSC 9923 / NRRL Y-1056) (Yeast).